The sequence spans 816 residues: Leucine--tRNA ligase (816 aa).

Residues 40-51 (PYPSGSGLHVGH) carry the 'HIGH' region motif. The 'KMSKS' region signature appears at 576–580 (KMSKS). K579 contributes to the ATP binding site.

It belongs to the class-I aminoacyl-tRNA synthetase family.

It localises to the cytoplasm. The enzyme catalyses tRNA(Leu) + L-leucine + ATP = L-leucyl-tRNA(Leu) + AMP + diphosphate. The polypeptide is Leucine--tRNA ligase (Chlorobium phaeobacteroides (strain DSM 266 / SMG 266 / 2430)).